Reading from the N-terminus, the 243-residue chain is Chalcone--flavanone isomerase (243 aa).

The substrate site is built by threonine 50, asparagine 115, and serine 192.

The protein belongs to the chalcone isomerase family.

It catalyses the reaction a chalcone = a flavanone.. Its pathway is secondary metabolite biosynthesis; flavonoid biosynthesis. In terms of biological role, catalyzes the intramolecular cyclization of bicyclic chalcones into tricyclic (S)-flavanones. Responsible for the isomerization of 4,2',4',6'-tetrahydroxychalcone (also termed chalcone) into naringenin. In Ipomoea batatas (Sweet potato), this protein is Chalcone--flavanone isomerase (CHI).